A 123-amino-acid polypeptide reads, in one-letter code: MSAQNSTDPMGATNPENGGATATDLKGKGRAPAAQEPVEDTSMAEDDDDDDDEEDPEEEPEAADDDNMEEIDLDNVIGRRTRGKVIDFANAAQENPADDDDEEDDDDFVEDDNKMDDSKMDED.

Residues 1–123 (MSAQNSTDPM…KMDDSKMDED (123 aa)) form a disordered region. Composition is skewed to acidic residues over residues 37 to 73 (PVED…EIDL) and 96 to 110 (PADD…DFVE). A compositionally biased stretch (basic and acidic residues) spans 111–123 (DDNKMDDSKMDED).

It belongs to the CHZ1 family. As to quaternary structure, forms a heterotrimer with H2A.Z-H2B, stabilizing the association of the histone dimer. Also, with a lower affinity, forms a heterotrimer with H2A-H2B.

Its subcellular location is the nucleus. In terms of biological role, forms a chaperone-bound H2A.Z-H2B complex that acts as a source for SWR1 complex-dependent H2A to H2A.Z histone replacement in chromatin. This is Histone H2A.Z-specific chaperone CHZ1 (CHZ1) from Chaetomium globosum (strain ATCC 6205 / CBS 148.51 / DSM 1962 / NBRC 6347 / NRRL 1970) (Soil fungus).